A 249-amino-acid chain; its full sequence is L-fucose operon activator (249 aa).

The 56-residue stretch at 1–56 (MNYRDELILQWVNQQGKASVIELAQHCDISVETIRRDLNKLANKGLLHRTHGGAVS) folds into the HTH deoR-type domain. The H-T-H motif DNA-binding region spans 18-37 (ASVIELAQHCDISVETIRRD).

In terms of biological role, transcriptional activator of the fuc operon. This is L-fucose operon activator (fucR) from Haemophilus influenzae (strain ATCC 51907 / DSM 11121 / KW20 / Rd).